A 314-amino-acid chain; its full sequence is uncharacterized protein (314 aa).

2 stretches are compositionally biased toward basic residues: residues 1–16 and 49–65; these read MAGNSKRRGAVRKAGT and AAKRAAKAAKQQQRRPA. The tract at residues 1–73 is disordered; sequence MAGNSKRRGA…PARKTDETEL (73 aa). The S-adenosyl-L-methionine site is built by Gly266, Ile286, and Leu295.

It belongs to the class IV-like SAM-binding methyltransferase superfamily. RNA methyltransferase TrmH family.

This is an uncharacterized protein from Mycobacterium sp. (strain KMS).